A 405-amino-acid chain; its full sequence is S-adenosylmethionine synthase (405 aa).

139 to 144 (GQGSVD) is a binding site for ATP.

It belongs to the AdoMet synthase 2 family. The cofactor is Mg(2+).

It carries out the reaction L-methionine + ATP + H2O = S-adenosyl-L-methionine + phosphate + diphosphate. Its pathway is amino-acid biosynthesis; S-adenosyl-L-methionine biosynthesis; S-adenosyl-L-methionine from L-methionine: step 1/1. Catalyzes the formation of S-adenosylmethionine from methionine and ATP. The polypeptide is S-adenosylmethionine synthase (Thermococcus gammatolerans (strain DSM 15229 / JCM 11827 / EJ3)).